The primary structure comprises 109 residues: Iron-sulfur cluster assembly protein CyaY (109 aa).

Belongs to the frataxin family.

Functionally, involved in iron-sulfur (Fe-S) cluster assembly. May act as a regulator of Fe-S biogenesis. In Shewanella sp. (strain ANA-3), this protein is Iron-sulfur cluster assembly protein CyaY.